Reading from the N-terminus, the 115-residue chain is Large ribosomal subunit protein bL19 (115 aa).

It belongs to the bacterial ribosomal protein bL19 family.

Functionally, this protein is located at the 30S-50S ribosomal subunit interface and may play a role in the structure and function of the aminoacyl-tRNA binding site. The chain is Large ribosomal subunit protein bL19 from Tolumonas auensis (strain DSM 9187 / NBRC 110442 / TA 4).